We begin with the raw amino-acid sequence, 233 residues long: Protein FAM204A (233 aa).

A disordered region spans residues 1–126; that stretch reads MWSGLLPPGL…HSEPSSNETQ (126 aa). Over residues 13–24 the composition is skewed to acidic residues; that stretch reads SDAESNSEDEAT. Over residues 39–58 the composition is skewed to basic and acidic residues; the sequence is ESIRKTEIIDFSTDEPKTET. Residues 97–109 are compositionally biased toward basic residues; the sequence is FRGKRRKRSRKDK. Positions 144 to 164 form a coiled coil; it reads VKRKKVEKSGLEKRIDQAVEE.

The protein is Protein FAM204A (FAM204A) of Homo sapiens (Human).